We begin with the raw amino-acid sequence, 358 residues long: 3-isopropylmalate dehydrogenase (358 aa).

Residue 77–90 (GEKWDSLPRELRPE) participates in NAD(+) binding. Substrate-binding residues include R97, R107, R135, and D220. Residues D220, D244, and D248 each coordinate Mg(2+). 277-289 (GSAPDIAGQGIAN) contributes to the NAD(+) binding site.

Belongs to the isocitrate and isopropylmalate dehydrogenases family. LeuB type 1 subfamily. In terms of assembly, homodimer. Mg(2+) is required as a cofactor. Requires Mn(2+) as cofactor.

It localises to the cytoplasm. It catalyses the reaction (2R,3S)-3-isopropylmalate + NAD(+) = 4-methyl-2-oxopentanoate + CO2 + NADH. Its pathway is amino-acid biosynthesis; L-leucine biosynthesis; L-leucine from 3-methyl-2-oxobutanoate: step 3/4. Functionally, catalyzes the oxidation of 3-carboxy-2-hydroxy-4-methylpentanoate (3-isopropylmalate) to 3-carboxy-4-methyl-2-oxopentanoate. The product decarboxylates to 4-methyl-2 oxopentanoate. The chain is 3-isopropylmalate dehydrogenase from Wolinella succinogenes (strain ATCC 29543 / DSM 1740 / CCUG 13145 / JCM 31913 / LMG 7466 / NCTC 11488 / FDC 602W) (Vibrio succinogenes).